The sequence spans 82 residues: Myosin light chain alkali (82 aa).

The EF-hand domain maps to 7-42 (GCYGDFIECLKLYDKEENGTMMLAELQHALLALGES).

As to quaternary structure, myosin is a hexamer of 2 heavy chains and 4 light chains.

The polypeptide is Myosin light chain alkali (Mlc1) (Drosophila sechellia (Fruit fly)).